We begin with the raw amino-acid sequence, 137 residues long: Small ribosomal subunit protein uS12 (137 aa).

Disordered regions lie at residues 1–21 (MPTI…KSDS) and 34–57 (VHTK…TPKK).

This sequence belongs to the universal ribosomal protein uS12 family. As to quaternary structure, part of the 30S ribosomal subunit. Contacts proteins S8 and S17. May interact with IF1 in the 30S initiation complex.

With S4 and S5 plays an important role in translational accuracy. In terms of biological role, interacts with and stabilizes bases of the 16S rRNA that are involved in tRNA selection in the A site and with the mRNA backbone. Located at the interface of the 30S and 50S subunits, it traverses the body of the 30S subunit contacting proteins on the other side and probably holding the rRNA structure together. The combined cluster of proteins S8, S12 and S17 appears to hold together the shoulder and platform of the 30S subunit. The polypeptide is Small ribosomal subunit protein uS12 (Streptococcus mutans serotype c (strain ATCC 700610 / UA159)).